We begin with the raw amino-acid sequence, 330 residues long: tRNA U34 carboxymethyltransferase (330 aa).

Residues lysine 91, tryptophan 105, lysine 110, glycine 130, aspartate 152 to serine 154, isoleucine 181 to glutamate 182, methionine 196, tyrosine 200, and arginine 315 contribute to the carboxy-S-adenosyl-L-methionine site.

This sequence belongs to the class I-like SAM-binding methyltransferase superfamily. CmoB family. As to quaternary structure, homotetramer.

The catalysed reaction is carboxy-S-adenosyl-L-methionine + 5-hydroxyuridine(34) in tRNA = 5-carboxymethoxyuridine(34) in tRNA + S-adenosyl-L-homocysteine + H(+). Functionally, catalyzes carboxymethyl transfer from carboxy-S-adenosyl-L-methionine (Cx-SAM) to 5-hydroxyuridine (ho5U) to form 5-carboxymethoxyuridine (cmo5U) at position 34 in tRNAs. This is tRNA U34 carboxymethyltransferase from Shewanella sp. (strain ANA-3).